The sequence spans 370 residues: Holliday junction branch migration complex subunit RuvB 2 (370 aa).

Residues 1–54 (MAIISSRAAGAEDPGQRQQKSSARRRESKLAFARAEGLLQPQAHPSEAQEESLR) form a disordered region. The segment at 13-214 (DPGQRQQKSS…FGQVQRLRFY (202 aa)) is large ATPase domain (RuvB-L). ATP-binding positions include leucine 53, arginine 54, glycine 95, lysine 98, threonine 99, threonine 100, 161 to 163 (EDF), arginine 204, tyrosine 214, and arginine 251. Threonine 99 serves as a coordination point for Mg(2+). Residues 215–285 (EPHELAEIVL…VAAAALELFQ (71 aa)) form a small ATPAse domain (RuvB-S) region. Residues 288–370 (PMGLDWTDRK…TAQSPLPVWS (83 aa)) are head domain (RuvB-H). The DNA site is built by arginine 343 and arginine 348.

It belongs to the RuvB family. As to quaternary structure, homohexamer. Forms an RuvA(8)-RuvB(12)-Holliday junction (HJ) complex. HJ DNA is sandwiched between 2 RuvA tetramers; dsDNA enters through RuvA and exits via RuvB. An RuvB hexamer assembles on each DNA strand where it exits the tetramer. Each RuvB hexamer is contacted by two RuvA subunits (via domain III) on 2 adjacent RuvB subunits; this complex drives branch migration. In the full resolvosome a probable DNA-RuvA(4)-RuvB(12)-RuvC(2) complex forms which resolves the HJ.

It localises to the cytoplasm. It carries out the reaction ATP + H2O = ADP + phosphate + H(+). Its function is as follows. The RuvA-RuvB-RuvC complex processes Holliday junction (HJ) DNA during genetic recombination and DNA repair, while the RuvA-RuvB complex plays an important role in the rescue of blocked DNA replication forks via replication fork reversal (RFR). RuvA specifically binds to HJ cruciform DNA, conferring on it an open structure. The RuvB hexamer acts as an ATP-dependent pump, pulling dsDNA into and through the RuvAB complex. RuvB forms 2 homohexamers on either side of HJ DNA bound by 1 or 2 RuvA tetramers; 4 subunits per hexamer contact DNA at a time. Coordinated motions by a converter formed by DNA-disengaged RuvB subunits stimulates ATP hydrolysis and nucleotide exchange. Immobilization of the converter enables RuvB to convert the ATP-contained energy into a lever motion, pulling 2 nucleotides of DNA out of the RuvA tetramer per ATP hydrolyzed, thus driving DNA branch migration. The RuvB motors rotate together with the DNA substrate, which together with the progressing nucleotide cycle form the mechanistic basis for DNA recombination by continuous HJ branch migration. Branch migration allows RuvC to scan DNA until it finds its consensus sequence, where it cleaves and resolves cruciform DNA. This Synechococcus sp. (strain JA-3-3Ab) (Cyanobacteria bacterium Yellowstone A-Prime) protein is Holliday junction branch migration complex subunit RuvB 2.